A 1043-amino-acid polypeptide reads, in one-letter code: Sucrose-phosphate synthase 1 (1043 aa).

The segment covering 95 to 117 has biased composition (basic and acidic residues); it reads EEKEAQRLAKRRLEREKGRREAT. Residues 95–127 are disordered; that stretch reads EEKEAQRLAKRRLEREKGRREATADMSEEFSEG. Serine 121, serine 125, serine 152, and serine 155 each carry phosphoserine. The interval 670-693 is disordered; the sequence is PRHPQWQSDDGGDNSEPESPSDSL.

It belongs to the glycosyltransferase 1 family. In terms of assembly, homodimer or homotetramer. In terms of processing, phosphorylated at Ser-152 upon sucrose supply. As to expression, expressed in seeds, stems, rosette leaves, flowers and siliques. Highly expressed in maturing nectaries.

It catalyses the reaction beta-D-fructose 6-phosphate + UDP-alpha-D-glucose = sucrose 6(F)-phosphate + UDP + H(+). The protein operates within glycan biosynthesis; sucrose biosynthesis; sucrose from D-fructose 6-phosphate and UDP-alpha-D-glucose: step 1/2. With respect to regulation, activity is regulated by phosphorylation and moderated by concentration of metabolites and light. In terms of biological role, plays a major role in photosynthetic sucrose synthesis by catalyzing the rate-limiting step of sucrose biosynthesis from UDP-glucose and fructose- 6-phosphate. Involved in the regulation of carbon partitioning in the leaves of plants. May regulate the synthesis of sucrose and therefore play a major role as a limiting factor in the export of photoassimilates out of the leaf. Plays a role for sucrose availability that is essential for plant growth and fiber elongation. Required for nectar secretion. The protein is Sucrose-phosphate synthase 1 (SPS1) of Arabidopsis thaliana (Mouse-ear cress).